Here is a 313-residue protein sequence, read N- to C-terminus: Porphobilinogen deaminase (313 aa).

Cys-242 bears the S-(dipyrrolylmethanemethyl)cysteine mark.

This sequence belongs to the HMBS family. Monomer. Requires dipyrromethane as cofactor.

It catalyses the reaction 4 porphobilinogen + H2O = hydroxymethylbilane + 4 NH4(+). It participates in porphyrin-containing compound metabolism; protoporphyrin-IX biosynthesis; coproporphyrinogen-III from 5-aminolevulinate: step 2/4. Functionally, tetrapolymerization of the monopyrrole PBG into the hydroxymethylbilane pre-uroporphyrinogen in several discrete steps. The sequence is that of Porphobilinogen deaminase from Yersinia pestis bv. Antiqua (strain Angola).